The sequence spans 252 residues: MPEVTRVSESDRLFAQPQQRVADFVFNEDVVRVFPDMIKRSVPGYPTIVENIGVLGAQFARPHSVLYDLGCSLGAVTQSLRRHVRSDGCRVIGVDNSHAMIERCGEYLHAQDAMYQELLPVELIEADILALELQPTSLVAMNFTLQFVAPDQRLGLLRNIRRALLPGGALILSEKLRFADAQEHALLTDLHIAFKRANGYSELEIAQKRSALENVMLPDTFEEHRERLLAAGFSRVSQWFQCLNFASMIALP.

S-adenosyl-L-methionine-binding positions include Tyr-45, 70 to 72 (GCS), 95 to 96 (DN), 127 to 128 (DI), Asn-142, and Arg-209.

Belongs to the class I-like SAM-binding methyltransferase superfamily. Cx-SAM synthase family. As to quaternary structure, homodimer.

The catalysed reaction is prephenate + S-adenosyl-L-methionine = carboxy-S-adenosyl-L-methionine + 3-phenylpyruvate + H2O. Functionally, catalyzes the conversion of S-adenosyl-L-methionine (SAM) to carboxy-S-adenosyl-L-methionine (Cx-SAM). The polypeptide is Carboxy-S-adenosyl-L-methionine synthase (Pseudomonas paraeruginosa (strain DSM 24068 / PA7) (Pseudomonas aeruginosa (strain PA7))).